Reading from the N-terminus, the 177-residue chain is Large ribosomal subunit protein uL6 (177 aa).

This sequence belongs to the universal ribosomal protein uL6 family. Part of the 50S ribosomal subunit.

This protein binds to the 23S rRNA, and is important in its secondary structure. It is located near the subunit interface in the base of the L7/L12 stalk, and near the tRNA binding site of the peptidyltransferase center. The protein is Large ribosomal subunit protein uL6 of Polynucleobacter necessarius subsp. necessarius (strain STIR1).